Here is a 431-residue protein sequence, read N- to C-terminus: Serine--tRNA ligase (431 aa).

238–240 is a binding site for L-serine; sequence TAE. Residue 269 to 271 participates in ATP binding; the sequence is RSE. E292 is an L-serine binding site. Position 356–359 (356–359) interacts with ATP; it reads EISS. An L-serine-binding site is contributed by S392.

Belongs to the class-II aminoacyl-tRNA synthetase family. Type-1 seryl-tRNA synthetase subfamily. In terms of assembly, homodimer. The tRNA molecule binds across the dimer.

It localises to the cytoplasm. It carries out the reaction tRNA(Ser) + L-serine + ATP = L-seryl-tRNA(Ser) + AMP + diphosphate + H(+). The catalysed reaction is tRNA(Sec) + L-serine + ATP = L-seryl-tRNA(Sec) + AMP + diphosphate + H(+). It participates in aminoacyl-tRNA biosynthesis; selenocysteinyl-tRNA(Sec) biosynthesis; L-seryl-tRNA(Sec) from L-serine and tRNA(Sec): step 1/1. Catalyzes the attachment of serine to tRNA(Ser). Is also able to aminoacylate tRNA(Sec) with serine, to form the misacylated tRNA L-seryl-tRNA(Sec), which will be further converted into selenocysteinyl-tRNA(Sec). The chain is Serine--tRNA ligase from Pectobacterium carotovorum subsp. carotovorum (strain PC1).